The primary structure comprises 496 residues: WD repeat-containing protein 37 (496 aa).

Polar residues-rich tracts occupy residues 1-13 (MPTE…TARQ) and 22-31 (SLSIRRTNSS). The segment at 1–50 (MPTESGSCSTARQAKQKRKSHSLSIRRTNSSEQERTGLPREMLEGQDSKL) is disordered. Residues 32 to 47 (EQERTGLPREMLEGQD) show a composition bias toward basic and acidic residues. 2 WD repeats span residues 154 to 194 (GHRD…CLVK) and 197 to 236 (GHVG…PTPQ). The segment at 238 to 267 (VADTSQQISGEDEIECSDKDEPDIDGDVSS) is disordered. Residues 247–265 (GEDEIECSDKDEPDIDGDV) show a composition bias toward acidic residues. WD repeat units lie at residues 281 to 320 (SHQG…LVHS), 323 to 362 (GHDQ…IHSV), 367 to 405 (GHTD…SPIA), 408 to 447 (RTDS…LARL), and 454 to 495 (GHRR…LLQE).

In terms of assembly, forms homodimers. Interacts with PACS1. Interacts with PACS2.

It is found in the cytoplasm. The protein localises to the nucleus. Required for normal ER Ca2+ handling in lymphocytes. Together with PACS1, it plays an essential role in stabilizing peripheral lymphocyte populations. The chain is WD repeat-containing protein 37 (Wdr37) from Mus musculus (Mouse).